The chain runs to 831 residues: Probable beta-glucosidase H (831 aa).

N-linked (GlcNAc...) asparagine glycosylation is present at Asn13. The active site involves Asp225. One can recognise a PA14 domain in the interval 389–549 (RLLSNAVIHF…DAEEMINRAV (161 aa)). N-linked (GlcNAc...) asparagine glycans are attached at residues Asn474, Asn514, Asn604, Asn629, Asn726, and Asn823.

This sequence belongs to the glycosyl hydrolase 3 family.

It localises to the secreted. The enzyme catalyses Hydrolysis of terminal, non-reducing beta-D-glucosyl residues with release of beta-D-glucose.. Its pathway is glycan metabolism; cellulose degradation. Beta-glucosidases are one of a number of cellulolytic enzymes involved in the degradation of cellulosic biomass. Catalyzes the last step releasing glucose from the inhibitory cellobiose. The protein is Probable beta-glucosidase H (bglH) of Emericella nidulans (strain FGSC A4 / ATCC 38163 / CBS 112.46 / NRRL 194 / M139) (Aspergillus nidulans).